Reading from the N-terminus, the 527-residue chain is Putative BTB/POZ domain and WD-repeat protein R783 (527 aa).

Residues 45-115 (TDVTIVLDDG…FYSQNTDTRN (71 aa)) form the BTB domain. 5 WD repeats span residues 215–266 (IHGD…VEAS), 272–310 (NVKT…LIKT), 313–353 (KHKN…IVRC), 355–391 (ISPV…FLFK), and 436–476 (YCPS…DNKY).

Belongs to the mimivirus BTB/WD family.

The sequence is that of Putative BTB/POZ domain and WD-repeat protein R783 from Acanthamoeba polyphaga (Amoeba).